A 481-amino-acid chain; its full sequence is Glutamate--glyoxylate aminotransferase 1 (481 aa).

Lys291 is subject to N6-(pyridoxal phosphate)lysine. Positions Ser479–Met481 match the Peroxisomal targeting signal motif.

Belongs to the class-I pyridoxal-phosphate-dependent aminotransferase family. Alanine aminotransferase subfamily. As to quaternary structure, homodimer. Requires pyridoxal 5'-phosphate as cofactor. The N-terminus is blocked. As to expression, mostly expressed in leaves, and, to a lower extent, in shoots, stems, flowers, seedlings and green siliques.

The protein resides in the peroxisome. The enzyme catalyses L-alanine + 2-oxoglutarate = pyruvate + L-glutamate. The catalysed reaction is glyoxylate + L-alanine = glycine + pyruvate. It catalyses the reaction glycine + 2-oxoglutarate = glyoxylate + L-glutamate. It participates in amino-acid biosynthesis; glycine biosynthesis; glycine from glyoxylate: step 1/1. It functions in the pathway photosynthesis; C4 acid pathway. The protein operates within amino-acid degradation; L-alanine degradation via transaminase pathway; pyruvate from L-alanine: step 1/1. Catalyzes the glutamate:glyoxylate (GGT or GGAT), alanine:glyoxylate (AGT), alanine:2-oxoglutarate (AKT) and glutamate:pyruvate (GPT) aminotransferase reactions in peroxisomes. Required for abscisic acid (ABA)- and stress-mediated responses in an H(2)O(2)-dependent manner. Functions as a photorespiratory aminotransferase that modulates amino acid content during photorespiration (GGAT activity); promotes serine, glycine and citrulline metabolism in response to light. This is Glutamate--glyoxylate aminotransferase 1 (GGAT1) from Arabidopsis thaliana (Mouse-ear cress).